The sequence spans 280 residues: Nitrogenase iron protein (280 aa).

ATP is bound at residue 8 to 15; that stretch reads GKGGIGKS. [4Fe-4S] cluster is bound at residue Cys-95. An ADP-ribosylarginine; by dinitrogenase reductase ADP-ribosyltransferase modification is found at Arg-98. Cys-128 contacts [4Fe-4S] cluster.

It belongs to the NifH/BchL/ChlL family. Homodimer. The cofactor is [4Fe-4S] cluster. Post-translationally, the reversible ADP-ribosylation of Arg-98 inactivates the nitrogenase reductase and regulates nitrogenase activity.

It carries out the reaction N2 + 8 reduced [2Fe-2S]-[ferredoxin] + 16 ATP + 16 H2O = H2 + 8 oxidized [2Fe-2S]-[ferredoxin] + 2 NH4(+) + 16 ADP + 16 phosphate + 6 H(+). Functionally, the key enzymatic reactions in nitrogen fixation are catalyzed by the nitrogenase complex, which has 2 components: the iron protein and the molybdenum-iron protein. This is Nitrogenase iron protein from Methanospirillum hungatei JF-1 (strain ATCC 27890 / DSM 864 / NBRC 100397 / JF-1).